The following is a 459-amino-acid chain: Bifunctional protein GlmU (459 aa).

The segment at M1–R230 is pyrophosphorylase. Residues L9–G12, K23, Q73, and G78–T79 each bind UDP-N-acetyl-alpha-D-glucosamine. Residue D103 coordinates Mg(2+). Residues G140, E155, N170, and N228 each coordinate UDP-N-acetyl-alpha-D-glucosamine. N228 is a binding site for Mg(2+). Positions V231–N251 are linker. The tract at residues G252–S459 is N-acetyltransferase. 2 residues coordinate UDP-N-acetyl-alpha-D-glucosamine: R333 and K351. The active-site Proton acceptor is the H363. UDP-N-acetyl-alpha-D-glucosamine contacts are provided by Y366 and N377. Acetyl-CoA is bound by residues N386–Y387, A423, and R440.

It in the N-terminal section; belongs to the N-acetylglucosamine-1-phosphate uridyltransferase family. In the C-terminal section; belongs to the transferase hexapeptide repeat family. In terms of assembly, homotrimer. Mg(2+) is required as a cofactor.

Its subcellular location is the cytoplasm. It catalyses the reaction alpha-D-glucosamine 1-phosphate + acetyl-CoA = N-acetyl-alpha-D-glucosamine 1-phosphate + CoA + H(+). It carries out the reaction N-acetyl-alpha-D-glucosamine 1-phosphate + UTP + H(+) = UDP-N-acetyl-alpha-D-glucosamine + diphosphate. Its pathway is nucleotide-sugar biosynthesis; UDP-N-acetyl-alpha-D-glucosamine biosynthesis; N-acetyl-alpha-D-glucosamine 1-phosphate from alpha-D-glucosamine 6-phosphate (route II): step 2/2. It participates in nucleotide-sugar biosynthesis; UDP-N-acetyl-alpha-D-glucosamine biosynthesis; UDP-N-acetyl-alpha-D-glucosamine from N-acetyl-alpha-D-glucosamine 1-phosphate: step 1/1. It functions in the pathway bacterial outer membrane biogenesis; LPS lipid A biosynthesis. Catalyzes the last two sequential reactions in the de novo biosynthetic pathway for UDP-N-acetylglucosamine (UDP-GlcNAc). The C-terminal domain catalyzes the transfer of acetyl group from acetyl coenzyme A to glucosamine-1-phosphate (GlcN-1-P) to produce N-acetylglucosamine-1-phosphate (GlcNAc-1-P), which is converted into UDP-GlcNAc by the transfer of uridine 5-monophosphate (from uridine 5-triphosphate), a reaction catalyzed by the N-terminal domain. This Bacillus mycoides (strain KBAB4) (Bacillus weihenstephanensis) protein is Bifunctional protein GlmU.